A 380-amino-acid chain; its full sequence is Cytochrome b (380 aa).

4 consecutive transmembrane segments (helical) span residues F33–M53, W77–I98, W113–L133, and F178–L198. Heme b-binding residues include H83 and H97. Residues H182 and H196 each contribute to the heme b site. Position 201 (H201) interacts with a ubiquinone. The next 4 helical transmembrane spans lie at Y226 to S246, L288 to H308, V320 to G340, and F347 to P367.

This sequence belongs to the cytochrome b family. The cytochrome bc1 complex contains 3 respiratory subunits (MT-CYB, CYC1 and UQCRFS1), 2 core proteins (UQCRC1 and UQCRC2) and probably 6 low-molecular weight proteins. The cofactor is heme b.

Its subcellular location is the mitochondrion inner membrane. Component of the ubiquinol-cytochrome c reductase complex (complex III or cytochrome b-c1 complex) that is part of the mitochondrial respiratory chain. The b-c1 complex mediates electron transfer from ubiquinol to cytochrome c. Contributes to the generation of a proton gradient across the mitochondrial membrane that is then used for ATP synthesis. The sequence is that of Cytochrome b (mt-cyb) from Sarda sarda (Atlantic bonito).